A 319-amino-acid chain; its full sequence is MGRSASLLRLRDPAPLPTDIAPDPAEAPPSPAADRRVIVVTGMSGAGRTTVLRALEDIGYEAVDNLPLSLFEALTQGRWDQPRPLVLGIDTRTRGFHAATVLAAIERLVAATGFDVRLLFIDCDDEVLVRRYTETRRRHPLAVDRPLADGIALERALVAPLKERASRCLDTSILPPAKLRAVIEAEFSLDHRPELAIFVSSFGFRNGLPREADLVFDVRFLANPHYEPHLREMTGLDPAVAAYVAADPDFAPLIDRVTALLALLVPRYEKEGKSYLTIAIGCTGGKHRSVYTAERLAAWLNETGRRAHVRHRDLKETPR.

The segment at 1 to 34 is disordered; sequence MGRSASLLRLRDPAPLPTDIAPDPAEAPPSPAAD. Residue 42-49 participates in ATP binding; the sequence is GMSGAGRT. 90-93 is a binding site for GTP; it reads DTRT.

Belongs to the RapZ-like family.

Its function is as follows. Displays ATPase and GTPase activities. This Rhodospirillum rubrum (strain ATCC 11170 / ATH 1.1.1 / DSM 467 / LMG 4362 / NCIMB 8255 / S1) protein is Nucleotide-binding protein Rru_A3448.